The chain runs to 496 residues: Lysine--tRNA ligase (496 aa).

The Mg(2+) site is built by Glu409 and Glu416.

This sequence belongs to the class-II aminoacyl-tRNA synthetase family. In terms of assembly, homodimer. Mg(2+) is required as a cofactor.

The protein localises to the cytoplasm. It catalyses the reaction tRNA(Lys) + L-lysine + ATP = L-lysyl-tRNA(Lys) + AMP + diphosphate. In Streptococcus pneumoniae serotype 19F (strain G54), this protein is Lysine--tRNA ligase.